Here is a 332-residue protein sequence, read N- to C-terminus: Formamidase (332 aa).

Positions 14 to 259 constitute a CN hydrolase domain; the sequence is FLAALIQYPV…WEIVTAEVYP (246 aa). The active-site Proton acceptor is Glu60. The active-site Proton donor is the Lys132. Cys165 (nucleophile) is an active-site residue.

Belongs to the carbon-nitrogen hydrolase superfamily. Aliphatic amidase family.

The enzyme catalyses formamide + H2O = formate + NH4(+). Is an aliphatic amidase with a restricted substrate specificity, as it only hydrolyzes formamide. The protein is Formamidase of Bacillus cereus (strain Q1).